Consider the following 215-residue polypeptide: UPF0502 protein YceH (215 aa).

Belongs to the UPF0502 family.

This is UPF0502 protein YceH from Salmonella arizonae (strain ATCC BAA-731 / CDC346-86 / RSK2980).